Reading from the N-terminus, the 473-residue chain is Glutamate--tRNA ligase (473 aa).

The short motif at 11-21 is the 'HIGH' region element; sequence PSPTGFLHIGG. A 'KMSKS' region motif is present at residues 240–244; that stretch reads KLSKR. Lysine 243 lines the ATP pocket.

The protein belongs to the class-I aminoacyl-tRNA synthetase family. Glutamate--tRNA ligase type 1 subfamily. In terms of assembly, monomer.

The protein localises to the cytoplasm. The catalysed reaction is tRNA(Glu) + L-glutamate + ATP = L-glutamyl-tRNA(Glu) + AMP + diphosphate. In terms of biological role, catalyzes the attachment of glutamate to tRNA(Glu) in a two-step reaction: glutamate is first activated by ATP to form Glu-AMP and then transferred to the acceptor end of tRNA(Glu). The polypeptide is Glutamate--tRNA ligase (Afipia carboxidovorans (strain ATCC 49405 / DSM 1227 / KCTC 32145 / OM5) (Oligotropha carboxidovorans)).